We begin with the raw amino-acid sequence, 159 residues long: Ribosomal RNA large subunit methyltransferase H (159 aa).

Residues L76, G108, and 127–132 each bind S-adenosyl-L-methionine; that span reads FSKMTL.

Belongs to the RNA methyltransferase RlmH family. Homodimer.

It is found in the cytoplasm. The enzyme catalyses pseudouridine(1915) in 23S rRNA + S-adenosyl-L-methionine = N(3)-methylpseudouridine(1915) in 23S rRNA + S-adenosyl-L-homocysteine + H(+). Specifically methylates the pseudouridine at position 1915 (m3Psi1915) in 23S rRNA. The polypeptide is Ribosomal RNA large subunit methyltransferase H (Bacillus cytotoxicus (strain DSM 22905 / CIP 110041 / 391-98 / NVH 391-98)).